Reading from the N-terminus, the 642-residue chain is Mini-chromosome maintenance complex-binding protein (642 aa).

Polar residues predominate over residues 151 to 161; it reads ARVSPSTSYTP. The disordered stretch occupies residues 151–196; sequence ARVSPSTSYTPSRHKRSYEDDEDMDLQPSKQKEQHPGSRQAGGLGG. The residue at position 154 (Ser-154) is a Phosphoserine. Thr-160 is subject to Phosphothreonine. A phosphoserine mark is found at Ser-167 and Ser-298.

It belongs to the MCMBP family. As to quaternary structure, interacts with the MCM complex: associates with the MCM3-7 complex which lacks MCM2, while it does not interact with the MCM complex when MCM2 is present (MCM2-7 complex). Interacts with the RPA complex, when composed of all RPA1, RPA2 and RPA3 components, but not with RPA1 or RPA2 alone.

It is found in the nucleus. In terms of biological role, associated component of the MCM complex that acts as a regulator of DNA replication. Binds to the MCM complex during late S phase and promotes the disassembly of the MCM complex from chromatin, thereby acting as a key regulator of pre-replication complex (pre-RC) unloading from replicated DNA. Can dissociate the MCM complex without addition of ATP; probably acts by destabilizing interactions of each individual subunits of the MCM complex. Required for sister chromatid cohesion. This is Mini-chromosome maintenance complex-binding protein (Mcmbp) from Mus musculus (Mouse).